The primary structure comprises 72 residues: SRY-related protein MG43 (72 aa).

A DNA-binding region (HMG box) is located at residues 1 to 69; that stretch reads VKRPMNAFMV…KHMADYPDYK (69 aa).

The protein resides in the nucleus. The chain is SRY-related protein MG43 from Tarentola mauritanica (Common wall gecko).